We begin with the raw amino-acid sequence, 211 residues long: ATP phosphoribosyltransferase (211 aa).

It belongs to the ATP phosphoribosyltransferase family. Short subfamily. In terms of assembly, heteromultimer composed of HisG and HisZ subunits.

It is found in the cytoplasm. It catalyses the reaction 1-(5-phospho-beta-D-ribosyl)-ATP + diphosphate = 5-phospho-alpha-D-ribose 1-diphosphate + ATP. It participates in amino-acid biosynthesis; L-histidine biosynthesis; L-histidine from 5-phospho-alpha-D-ribose 1-diphosphate: step 1/9. Its function is as follows. Catalyzes the condensation of ATP and 5-phosphoribose 1-diphosphate to form N'-(5'-phosphoribosyl)-ATP (PR-ATP). Has a crucial role in the pathway because the rate of histidine biosynthesis seems to be controlled primarily by regulation of HisG enzymatic activity. The protein is ATP phosphoribosyltransferase of Pseudomonas aeruginosa (strain UCBPP-PA14).